The following is a 243-amino-acid chain: tRNA (guanine-N(1)-)-methyltransferase (243 aa).

Residues Gly108 and 127–132 (LGDFVL) each bind S-adenosyl-L-methionine.

Belongs to the RNA methyltransferase TrmD family. In terms of assembly, homodimer.

It is found in the cytoplasm. It carries out the reaction guanosine(37) in tRNA + S-adenosyl-L-methionine = N(1)-methylguanosine(37) in tRNA + S-adenosyl-L-homocysteine + H(+). Functionally, specifically methylates guanosine-37 in various tRNAs. In Streptococcus equi subsp. zooepidemicus (strain MGCS10565), this protein is tRNA (guanine-N(1)-)-methyltransferase.